The sequence spans 1135 residues: Topless-related protein 4 (1135 aa).

Residues 4–36 (LSRELVFLILQFLDEEKFKDTVHRLEKESGFFF) enclose the LisH domain. The 59-residue stretch at 34 to 92 (FFFNMRYFEDSVTAGEWDDVEKYLSGFTKVDDNRYSMKIFFEIRKQKYLEALDKKDHAK) folds into the CTLH domain. Serine 214 carries the post-translational modification Phosphoserine. The interval 281-303 (LKRERPRSPPTNSLSMDYQTADS) is disordered. The span at 290-303 (PTNSLSMDYQTADS) shows a compositional bias: polar residues. WD repeat units follow at residues 355-395 (SQGS…KLVS), 417-456 (EYTAAVNRVVWSPDGGLLGVAYSKHIVHIYSYHGGEDLRN), 462-503 (AHAG…KLHT), 506-547 (GHEA…SRVD), 550-593 (APGR…VKRT), 597-636 (LGKRSVGVVQFDTMKNKFLVAGDEFQVKFWDMDSVDLLSS), 638-680 (AAEG…RILH), 776-815 (LLPARVVKLIYTNSGGAILALAENAAHKLWKWQKSERNLL), 843-881 (NKEDVVPCFALSKNDSYVMSASGGKISLFNMMTFKTMTT), 884-924 (APPP…VKSK), 927-966 (GHQKRVTGLAFSNVLNVLVSSGADSQLCVWSMDGWEKQAS), and 1020-1059 (ESSGSVTDAVYSCDSQSIYAAFDDGSVSILTATTLQLKCR). The segment at 1095-1135 (DGGVHVIEPPGPEGKWGISAPPENGAGPSVSSAPGSDQQPR) is disordered. Low complexity predominate over residues 1119-1135 (GAGPSVSSAPGSDQQPR).

In terms of assembly, tetramer. Interacts with WUS (via the C-terminal domain). Interacts with SPL (via EAR motif). Interacts with SPEAR3/TIE1. Binds to and corepresses GAF1/IDD2 at the promoter of GA20OX2 gene.

The protein resides in the nucleus. Its function is as follows. Transcription corepressor of Zinc finger transcription factors GAF1/IDD2 and ENY/IDD1 in regulation of gibberellin homeostasis and signaling. This Arabidopsis thaliana (Mouse-ear cress) protein is Topless-related protein 4 (TPR4).